A 287-amino-acid chain; its full sequence is Complement C1q-like protein 2 (287 aa).

The signal sequence occupies residues 1–21 (MALGLLIAVPLLLQAAPPGAA). The disordered stretch occupies residues 65–144 (LSANPPPPFI…GTGGGGDTEG (80 aa)). The 43-residue stretch at 76–118 (GPKGDPGRPGKPGPRGPPGEPGPPGPRGPPGEKGDSGRPGLPG) folds into the Collagen-like domain. Over residues 84–104 (PGKPGPRGPPGEPGPPGPRGP) the composition is skewed to pro residues. The segment covering 127 to 141 (GGVGVVSGGTGGGGD) has biased composition (gly residues). The region spanning 154-287 (FSGPKIAFYV…TFSGFLLYPD (134 aa)) is the C1q domain.

As to quaternary structure, forms homotrimers which can further assemble to form higher-order oligomeric complexes. Interacts with ADGRB3. May interact with ERFE. Forms heterooligomers with C1QL3 and C1QL4, when proteins are coexpressed; this interaction does not occur after secretion. Glycosylated, but not with N-linked glycans. Highest expression in eye, followed by placenta and brain, intermediate expression in adipose tissue and lowest expression in lymph node and testis.

The protein localises to the secreted. Functionally, may regulate the number of excitatory synapses that are formed on hippocampus neurons. Has no effect on inhibitory synapses. The protein is Complement C1q-like protein 2 (C1ql2) of Mus musculus (Mouse).